The primary structure comprises 166 residues: Ureidoglycolate lyase (166 aa).

Belongs to the ureidoglycolate lyase family. As to quaternary structure, homodimer. Ni(2+) serves as cofactor.

It catalyses the reaction (S)-ureidoglycolate = urea + glyoxylate. The protein operates within nitrogen metabolism; (S)-allantoin degradation. Its function is as follows. Catalyzes the catabolism of the allantoin degradation intermediate (S)-ureidoglycolate, generating urea and glyoxylate. Involved in the utilization of allantoin as nitrogen source. This Azotobacter vinelandii (strain DJ / ATCC BAA-1303) protein is Ureidoglycolate lyase.